The following is a 242-amino-acid chain: DNA repair protein RecO (242 aa).

Belongs to the RecO family. As to quaternary structure, monomer.

Its function is as follows. Involved in DNA repair and RecF pathway recombination. This Shigella flexneri serotype 5b (strain 8401) protein is DNA repair protein RecO.